The sequence spans 528 residues: Glutamyl-tRNA(Gln) amidotransferase subunit B, mitochondrial (528 aa).

The transit peptide at 1 to 21 (MSWRLSFRTNLLIYNVRRRNY) directs the protein to the mitochondrion.

Belongs to the GatB/GatE family. GatB subfamily. Subunit of the heterotrimeric GatCAB amidotransferase (AdT) complex, composed of A, B and C subunits.

Its subcellular location is the mitochondrion. It catalyses the reaction L-glutamyl-tRNA(Gln) + L-glutamine + ATP + H2O = L-glutaminyl-tRNA(Gln) + L-glutamate + ADP + phosphate + H(+). In terms of biological role, allows the formation of correctly charged Gln-tRNA(Gln) through the transamidation of misacylated Glu-tRNA(Gln) in the mitochondria. The reaction takes place in the presence of glutamine and ATP through an activated gamma-phospho-Glu-tRNA(Gln). The chain is Glutamyl-tRNA(Gln) amidotransferase subunit B, mitochondrial from Aedes aegypti (Yellowfever mosquito).